Consider the following 677-residue polypeptide: Collagen alpha-2(IX) chain (677 aa).

The N-terminal stretch at 1 to 21 is a signal peptide; it reads MAHRSPALCLLLLHAACLCLA. The segment at 25–161 is triple-helical region 4 (COL4); that stretch reads GPPGEPGPRG…PGKPGPPGHI (137 aa). A compositionally biased stretch (pro residues) spans 28 to 41; it reads GEPGPRGPPGPPGV. The segment at 28–516 is disordered; sequence GEPGPRGPPG…MPGQRGVAGR (489 aa). Residues 53–66 show a composition bias toward low complexity; that stretch reads SPGAPGSPGAKGEP. Pro residues predominate over residues 68–77; the sequence is APGPDGPPGK. Gly residues predominate over residues 91–100; sequence GPWGGQGLKG. Pro residues-rich tracts occupy residues 104 to 121 and 137 to 158; these read LPGP…PPGL and KGDP…PGPP. P158 carries the 4-hydroxyproline modification. The segment at 162-178 is nonhelical region 4 (NC4); sequence QGVEGSADFLCPTNCPP. O-linked (Xyl...) (glycosaminoglycan) serine glycosylation occurs at S167. P178 carries the 4-hydroxyproline modification. The interval 179-517 is triple-helical region 3 (COL3); the sequence is GPKGPQGLQG…PGQRGVAGRD (339 aa). K181 bears the 5-hydroxylysine mark. K181 carries O-linked (Gal...) hydroxylysine glycosylation. K190 carries the post-translational modification Allysine. Composition is skewed to low complexity over residues 363–382, 430–442, and 496–505; these read TPGL…AGVP, PGKT…TGDP, and RGLLGERGVP. A nonhelical region 3 (NC3) region spans residues 518-547; sequence AGDQHIIDVVLKMMQEQLAEVAVSAKRAAL. Residues 548 to 630 form a triple-helical region 2 (COL2) region; that stretch reads GGVGAMGPPG…PGLPGIPGHA (83 aa). The segment at 550 to 657 is disordered; that stretch reads VGAMGPPGPP…GRPGSPGPAG (108 aa). The span at 555–565 shows a compositional bias: pro residues; that stretch reads PPGPPGPPGPP. The segment covering 597-609 has biased composition (basic and acidic residues); that stretch reads KRGEKGERGDTGR. Positions 631–632 are nonhelical region 2 (NC2); the sequence is LA. A triple-helical region 1 (COL1) region spans residues 633 to 662; sequence GKDGERGPPGVPGDAGRPGSPGPAGLPGFC. Residues 663–677 form a nonhelical region 1 (NC1) region; sequence EPAACLGALPTPRHG.

It belongs to the fibril-associated collagens with interrupted helices (FACIT) family. Heterotrimer of an alpha 1(IX), an alpha 2(IX) and an alpha 3(IX) chain. The chains are linked to each other by interchain disulfide bonds. Trimers are also cross-linked via hydroxylysines. In terms of processing, covalently linked to the telopeptides of type II collagen by lysine-derived cross-links. Post-translationally, prolines at the third position of the tripeptide repeating unit (G-X-Y) are hydroxylated in some or all of the chains.

The protein localises to the secreted. It localises to the extracellular space. Its subcellular location is the extracellular matrix. Structural component of hyaline cartilage and vitreous of the eye. The chain is Collagen alpha-2(IX) chain (COL9A2) from Gallus gallus (Chicken).